We begin with the raw amino-acid sequence, 569 residues long: Cysteine--tRNA ligase CPS1 homolog, chloroplastic/mitochondrial (569 aa).

The N-terminal 42 residues, 1 to 42 (MAAARRAAGLLPLLLSSPSRARLPHRQALALTPPLLRPHRLY), are a transit peptide targeting the chloroplast and mitochondrion. Cys-99 is a Zn(2+) binding site. The 'HIGH' region signature appears at 101 to 111 (VTPYDDSHIGH). Residues Cys-279, His-304, and Glu-308 each contribute to the Zn(2+) site. The 'KMSKS' region motif lies at 336 to 340 (KMSKS). Lys-339 is a binding site for ATP.

It belongs to the class-I aminoacyl-tRNA synthetase family. Requires Zn(2+) as cofactor.

The protein localises to the plastid. It localises to the chloroplast. Its subcellular location is the mitochondrion. It catalyses the reaction tRNA(Cys) + L-cysteine + ATP = L-cysteinyl-tRNA(Cys) + AMP + diphosphate. Functionally, nuclear genome-encoded factor required for normal assembly of chloroplast polysomes. The sequence is that of Cysteine--tRNA ligase CPS1 homolog, chloroplastic/mitochondrial from Oryza sativa subsp. japonica (Rice).